A 197-amino-acid chain; its full sequence is MTPDPLNRLVAQLAKLPGIGEKTAQRLAFHILRAPGEYAAELSQAIREVKEKVHLCVRCFSLTDAETCNFCRDARRDERVLCVVETFADLMALERTREFKGRYHVLHGVLSPLEGVGPDQLRIRELLERLNDSRVEELILATNPDVEGEATALYLTRLLKPMGLRVTRIAQGLPMGGDLEFADQATLAKALSARRDL.

The C4-type zinc-finger motif lies at 56–71; it reads CVRCFSLTDAETCNFC. Positions 79-174 constitute a Toprim domain; sequence RVLCVVETFA…RVTRIAQGLP (96 aa).

Belongs to the RecR family.

In terms of biological role, may play a role in DNA repair. It seems to be involved in an RecBC-independent recombinational process of DNA repair. It may act with RecF and RecO. The chain is Recombination protein RecR from Myxococcus xanthus (strain DK1622).